The primary structure comprises 623 residues: MYSANHWGGSFEIAADGAAEDDHSRNMDLDRGALSARQHQLDETQQSWLLGPPEAKKKDKYVDLGCVVVKRKLLWWVLWTLLAAFILIGLPVIIAKSIPKKKPHAPPPDQYTDALHKALLFFNAQKSGRLPKNNGIKWRGNSGLSDGSDLTDVKGGLVGGYYDAGDNIKFHFPLAFSMTMLSWSVIEYSAKYKAVGEYDHVRELIKWGTDYLLLTFNSSASTIDKVYSQVGIAKINGTQPDDHYCWNRPEDMAYPRPVQTAGSAPDLGGEMAAALAAASIVFRDNAAYSKKLVNGAAAVYKFARSSGRRTPYSRGNQYIEYYYNSTSYWDEYMWSAAWMYYATGNNTYITFATDPRLPKNAKAFYSILDFSVFSWDNKLPGAELLLSRLRMFLNPGYPYEESLIGYHNTTSMNMCTYFPRFGAFNFTKGGLAQFNHGKGQPLQYTVANSFLAALYADYMESVNVPGWYCGPYFMTVDDLRSFARSQVNYILGDNPKKMSYVVGYGKKYPRRLHHRGASTPHNGIKYSCTGGYKWRDTKGADPNVLVGAMVGGPDKNDQFKDARLTYAQNEPTLVGNAGLVAALVALTNSGRGAGVTAVDKNTMFSAVPPMFPATPPPPSKWKP.

The Cytoplasmic segment spans residues 1–73; that stretch reads MYSANHWGGS…LGCVVVKRKL (73 aa). A helical; Signal-anchor for type II membrane protein membrane pass occupies residues 74 to 94; sequence LWWVLWTLLAAFILIGLPVII. Topologically, residues 95 to 623 are extracellular; sequence AKSIPKKKPH…TPPPPSKWKP (529 aa). Asp-166 (nucleophile) is an active-site residue. 6 N-linked (GlcNAc...) asparagine glycosylation sites follow: Asn-217, Asn-236, Asn-324, Asn-345, Asn-408, and Asn-425. Active-site residues include His-513, Asp-561, and Glu-570.

It belongs to the glycosyl hydrolase 9 (cellulase E) family. As to expression, ubiquitous.

The protein resides in the membrane. The enzyme catalyses Endohydrolysis of (1-&gt;4)-beta-D-glucosidic linkages in cellulose, lichenin and cereal beta-D-glucans.. The chain is Endoglucanase 12 (GLU3) from Oryza sativa subsp. japonica (Rice).